The primary structure comprises 221 residues: Large ribosomal subunit protein uL3 (221 aa).

Residues Gly-123 to Gly-156 form a disordered region.

Belongs to the universal ribosomal protein uL3 family. Part of the 50S ribosomal subunit. Forms a cluster with proteins L14 and L19.

Functionally, one of the primary rRNA binding proteins, it binds directly near the 3'-end of the 23S rRNA, where it nucleates assembly of the 50S subunit. In Aster yellows witches'-broom phytoplasma (strain AYWB), this protein is Large ribosomal subunit protein uL3.